Here is a 51-residue protein sequence, read N- to C-terminus: Insulin (51 aa).

3 disulfides stabilise this stretch: Cys-7-Cys-37, Cys-19-Cys-50, and Cys-36-Cys-41.

The protein belongs to the insulin family. In terms of assembly, heterodimer of a B chain and an A chain linked by two disulfide bonds.

It localises to the secreted. Its function is as follows. Insulin decreases blood glucose concentration. It increases cell permeability to monosaccharides, amino acids and fatty acids. It accelerates glycolysis, the pentose phosphate cycle, and glycogen synthesis in liver. This is Insulin (INS) from Didelphis virginiana (North American opossum).